Reading from the N-terminus, the 154-residue chain is 6,7-dimethyl-8-ribityllumazine synthase (154 aa).

5-amino-6-(D-ribitylamino)uracil-binding positions include phenylalanine 15, 47–49 (TFD), and 71–73 (AVI). 76-77 (ET) is a (2S)-2-hydroxy-3-oxobutyl phosphate binding site. The active-site Proton donor is histidine 79. Leucine 104 provides a ligand contact to 5-amino-6-(D-ribitylamino)uracil. Arginine 119 provides a ligand contact to (2S)-2-hydroxy-3-oxobutyl phosphate.

Belongs to the DMRL synthase family.

It carries out the reaction (2S)-2-hydroxy-3-oxobutyl phosphate + 5-amino-6-(D-ribitylamino)uracil = 6,7-dimethyl-8-(1-D-ribityl)lumazine + phosphate + 2 H2O + H(+). It participates in cofactor biosynthesis; riboflavin biosynthesis; riboflavin from 2-hydroxy-3-oxobutyl phosphate and 5-amino-6-(D-ribitylamino)uracil: step 1/2. In terms of biological role, catalyzes the formation of 6,7-dimethyl-8-ribityllumazine by condensation of 5-amino-6-(D-ribitylamino)uracil with 3,4-dihydroxy-2-butanone 4-phosphate. This is the penultimate step in the biosynthesis of riboflavin. The chain is 6,7-dimethyl-8-ribityllumazine synthase from Saccharolobus islandicus (strain L.S.2.15 / Lassen #1) (Sulfolobus islandicus).